A 367-amino-acid chain; its full sequence is Putative heat shock 70 kDa protein 7 (367 aa).

The protein belongs to the heat shock protein 70 family.

The sequence is that of Putative heat shock 70 kDa protein 7 (HSPA7) from Homo sapiens (Human).